A 1380-amino-acid polypeptide reads, in one-letter code: Tripeptidyl-peptidase 2 (1380 aa).

Positions 110 to 619 constitute a Peptidase S8 domain; the sequence is STFIASLMPK…QGLMQVDKAY (510 aa). Residues Asp145, His372, and Ser558 each act as charge relay system in the active site. Positions 1099–1143 are disordered; the sequence is DEKEGKNPKDNPVSYPISYVVPPNKPEEDKKAASAPTCSKSVSER. The span at 1110–1120 shows a compositional bias: low complexity; that stretch reads PVSYPISYVVP. Coiled coils occupy residues 1152–1181 and 1238–1300; these read KIKFLGNLKQETEEERSEWRKLCTCLKSEY and EDDE…ELTK.

Belongs to the peptidase S8 family. Assembles into a large oligomeric complex containing two related proteins 153 and 142 kDa that are derived from the single TPP2 gene. The 142 kDa form mainly differs from the 153 kDa form by a truncation at the C-terminal end.

The enzyme catalyses Release of an N-terminal tripeptide from a polypeptide.. With respect to regulation, inhibited by alanine-alanine-phenylalanine-chloromethylketone, butabindide and phenylmethanesulfonyl fluoride (PMSF), but not by leupeptin, N-ethylmaleimide, EDTA, MG132 and lactacystin. Serine protease of the proteasome pathway that may function with the 20S proteasome to degrade oxidized proteins generated by environmental stress. The polypeptide is Tripeptidyl-peptidase 2 (TPP2) (Arabidopsis thaliana (Mouse-ear cress)).